The chain runs to 454 residues: UPF0210 protein Cphy_2797 (454 aa).

The protein belongs to the UPF0210 family. As to quaternary structure, homodimer.

The protein is UPF0210 protein Cphy_2797 of Lachnoclostridium phytofermentans (strain ATCC 700394 / DSM 18823 / ISDg) (Clostridium phytofermentans).